We begin with the raw amino-acid sequence, 628 residues long: Pinene synthase, chloroplastic (628 aa).

The N-terminal 36 residues, 1-36 (MALVSTAPLASKSCLHKSLISSTHELKALSRTIPAL), are a transit peptide targeting the chloroplast. Mg(2+) contacts are provided by aspartate 379, aspartate 383, and aspartate 531. The DDXXD motif signature appears at 379-383 (DDMYD).

The protein belongs to the terpene synthase family. Tpsd subfamily. Requires Mg(2+) as cofactor. The cofactor is Mn(2+). K(+) serves as cofactor.

The protein localises to the plastid. The protein resides in the chloroplast. It carries out the reaction (2E)-geranyl diphosphate = (1S,5S)-alpha-pinene + diphosphate. The enzyme catalyses (2E)-geranyl diphosphate = (1S,5S)-beta-pinene + diphosphate. It participates in terpene metabolism; oleoresin biosynthesis. Involved in defensive oleoresin formation in conifers in response to insect attack or other injury. Involved in monoterpene (C10) olefins biosynthesis. A mixture of alpha- and beta-pinene is produced by this enzyme. The sequence is that of Pinene synthase, chloroplastic (ag3) from Abies grandis (Grand fir).